Consider the following 1414-residue polypeptide: DNA-directed RNA polymerase subunit beta' (1414 aa).

The Zn(2+) site is built by Cys70, Cys72, Cys85, and Cys88. Positions 460, 462, and 464 each coordinate Mg(2+). Zn(2+)-binding residues include Cys819, Cys893, Cys900, and Cys903. Residues 1391–1414 (AEEAFDFGTPSAPAEEPQQHPAAE) are disordered. Low complexity predominate over residues 1400 to 1414 (PSAPAEEPQQHPAAE).

This sequence belongs to the RNA polymerase beta' chain family. The RNAP catalytic core consists of 2 alpha, 1 beta, 1 beta' and 1 omega subunit. When a sigma factor is associated with the core the holoenzyme is formed, which can initiate transcription. It depends on Mg(2+) as a cofactor. Zn(2+) is required as a cofactor.

It catalyses the reaction RNA(n) + a ribonucleoside 5'-triphosphate = RNA(n+1) + diphosphate. Functionally, DNA-dependent RNA polymerase catalyzes the transcription of DNA into RNA using the four ribonucleoside triphosphates as substrates. This is DNA-directed RNA polymerase subunit beta' from Burkholderia lata (strain ATCC 17760 / DSM 23089 / LMG 22485 / NCIMB 9086 / R18194 / 383).